The following is a 158-amino-acid chain: NAD(P)H-quinone oxidoreductase subunit J, chloroplastic (158 aa).

It belongs to the complex I 30 kDa subunit family. As to quaternary structure, NDH is composed of at least 16 different subunits, 5 of which are encoded in the nucleus.

The protein resides in the plastid. Its subcellular location is the chloroplast thylakoid membrane. It catalyses the reaction a plastoquinone + NADH + (n+1) H(+)(in) = a plastoquinol + NAD(+) + n H(+)(out). The enzyme catalyses a plastoquinone + NADPH + (n+1) H(+)(in) = a plastoquinol + NADP(+) + n H(+)(out). Its function is as follows. NDH shuttles electrons from NAD(P)H:plastoquinone, via FMN and iron-sulfur (Fe-S) centers, to quinones in the photosynthetic chain and possibly in a chloroplast respiratory chain. The immediate electron acceptor for the enzyme in this species is believed to be plastoquinone. Couples the redox reaction to proton translocation, and thus conserves the redox energy in a proton gradient. This chain is NAD(P)H-quinone oxidoreductase subunit J, chloroplastic, found in Lactuca sativa (Garden lettuce).